Here is a 402-residue protein sequence, read N- to C-terminus: S-adenosylmethionine synthase (402 aa).

Residue histidine 15 participates in ATP binding. Aspartate 17 is a binding site for Mg(2+). Glutamate 43 is a binding site for K(+). L-methionine contacts are provided by glutamate 56 and glutamine 99. A flexible loop region spans residues 99 to 109; the sequence is QSPDIAQGVDT. Residues 174-176, 247-248, aspartate 256, 262-263, alanine 279, and lysine 283 contribute to the ATP site; these read DGK, RF, and RK. Aspartate 256 is an L-methionine binding site. Lysine 287 contacts L-methionine.

This sequence belongs to the AdoMet synthase family. As to quaternary structure, homotetramer; dimer of dimers. Requires Mg(2+) as cofactor. K(+) serves as cofactor.

It is found in the cytoplasm. It catalyses the reaction L-methionine + ATP + H2O = S-adenosyl-L-methionine + phosphate + diphosphate. It functions in the pathway amino-acid biosynthesis; S-adenosyl-L-methionine biosynthesis; S-adenosyl-L-methionine from L-methionine: step 1/1. Functionally, catalyzes the formation of S-adenosylmethionine (AdoMet) from methionine and ATP. The overall synthetic reaction is composed of two sequential steps, AdoMet formation and the subsequent tripolyphosphate hydrolysis which occurs prior to release of AdoMet from the enzyme. This Streptomyces griseus subsp. griseus (strain JCM 4626 / CBS 651.72 / NBRC 13350 / KCC S-0626 / ISP 5235) protein is S-adenosylmethionine synthase.